A 434-amino-acid polypeptide reads, in one-letter code: Pre-B-cell leukemia transcription factor 3 (434 aa).

Positions serine 20 to glycine 41 are disordered. Residues histidine 32–glycine 41 are compositionally biased toward basic and acidic residues. Residues glycine 41 to aspartate 234 enclose the PBC domain. Residues aspartate 48–glycine 127 are PBC-A. The segment at alanine 130 to aspartate 234 is PBC-B. A DNA-binding region (homeobox; TALE-type) is located at residues alanine 235 to isoleucine 297. The segment covering asparagine 326–serine 341 has biased composition (low complexity). Disordered regions lie at residues asparagine 326–aspartate 349 and leucine 403–asparagine 434. Over residues leucine 403 to threonine 422 the composition is skewed to polar residues.

This sequence belongs to the TALE/PBX homeobox family. Interacts with PBXIP1. Ubiquitously expressed.

The protein resides in the nucleus. Its function is as follows. Transcriptional activator that binds the sequence 5'-ATCAATCAA-3'. This Homo sapiens (Human) protein is Pre-B-cell leukemia transcription factor 3 (PBX3).